Consider the following 367-residue polypeptide: Aminomethyltransferase (367 aa).

It belongs to the GcvT family. The glycine cleavage system is composed of four proteins: P, T, L and H.

The catalysed reaction is N(6)-[(R)-S(8)-aminomethyldihydrolipoyl]-L-lysyl-[protein] + (6S)-5,6,7,8-tetrahydrofolate = N(6)-[(R)-dihydrolipoyl]-L-lysyl-[protein] + (6R)-5,10-methylene-5,6,7,8-tetrahydrofolate + NH4(+). Its function is as follows. The glycine cleavage system catalyzes the degradation of glycine. The polypeptide is Aminomethyltransferase (Mycolicibacterium paratuberculosis (strain ATCC BAA-968 / K-10) (Mycobacterium paratuberculosis)).